We begin with the raw amino-acid sequence, 161 residues long: Cytidylate kinase (161 aa).

7-15 is a binding site for ATP; it reads GLAGTGTTT.

Belongs to the cytidylate kinase family. Type 2 subfamily.

It localises to the cytoplasm. It catalyses the reaction CMP + ATP = CDP + ADP. It carries out the reaction dCMP + ATP = dCDP + ADP. The polypeptide is Cytidylate kinase (cmk) (Methanothermobacter thermautotrophicus (strain ATCC 29096 / DSM 1053 / JCM 10044 / NBRC 100330 / Delta H) (Methanobacterium thermoautotrophicum)).